The sequence spans 301 residues: Hydroxymethylglutaryl-CoA lyase (301 aa).

Positions 4–271 (VKVFEVGPRD…STGVDLEAVA (268 aa)) constitute a Pyruvate carboxyltransferase domain. R12 is a substrate binding site. A divalent metal cation-binding residues include D13, H204, and H206. The active site involves C237. Position 246 (N246) interacts with a divalent metal cation.

This sequence belongs to the HMG-CoA lyase family.

The catalysed reaction is (3S)-3-hydroxy-3-methylglutaryl-CoA = acetoacetate + acetyl-CoA. It functions in the pathway metabolic intermediate metabolism; (S)-3-hydroxy-3-methylglutaryl-CoA degradation; acetoacetate from (S)-3-hydroxy-3-methylglutaryl-CoA: step 1/1. Involved in the catabolism of branched amino acids such as leucine. The protein is Hydroxymethylglutaryl-CoA lyase (mvaB) of Pseudomonas mevalonii.